Consider the following 566-residue polypeptide: uncharacterized protein (566 aa).

This is an uncharacterized protein from Escherichia coli (strain K12).